The primary structure comprises 680 residues: Protein FAR1-RELATED SEQUENCE 11 (680 aa).

A disordered region spans residues 1-36 (MSDDPGQMLLIYDDPSDQRSLSLDDASSTEESPDDN). The FAR1 domain maps to 62 to 156 (EFYSTFAKRC…ANHHNHELLE (95 aa)). An MULE domain is found at 277 to 373 (AVVFDTTHRL…CIWMVVGKFP (97 aa)). The SWIM-type zinc-finger motif lies at 556 to 589 (YWVPQEGIISCSCQLFEFSGFLCRHALRVLSTGN).

Belongs to the FHY3/FAR1 family. In terms of tissue distribution, expressed in hypocotyls, rosette and cauline leaves, inflorescences stems, flowers and siliques.

The protein localises to the nucleus. Its function is as follows. Putative transcription activator involved in regulating light control of development. The polypeptide is Protein FAR1-RELATED SEQUENCE 11 (FRS11) (Arabidopsis thaliana (Mouse-ear cress)).